The primary structure comprises 270 residues: BPI fold-containing family A member 5 (270 aa).

An N-terminal signal peptide occupies residues 1-19 (MFLAGSFIVLCGLLAQSTA). A disulfide bridge links cysteine 196 with cysteine 238.

Belongs to the BPI/LBP/Plunc superfamily. Plunc family. As to expression, expressed in interpapillar epithelium of the anterior part of the tongue.

The protein resides in the secreted. May play a role in innate immunity in the oral cavity. The polypeptide is BPI fold-containing family A member 5 (Bpifa5) (Mus musculus (Mouse)).